A 765-amino-acid chain; its full sequence is LPS-assembly protein LptD (765 aa).

A signal peptide spans Met1 to Ala18.

Belongs to the LptD family. Component of the lipopolysaccharide transport and assembly complex. Interacts with LptE and LptA.

It localises to the cell outer membrane. Functionally, together with LptE, is involved in the assembly of lipopolysaccharide (LPS) at the surface of the outer membrane. This chain is LPS-assembly protein LptD, found in Shewanella sp. (strain MR-4).